Reading from the N-terminus, the 276-residue chain is S-adenosylmethionine decarboxylase proenzyme (276 aa).

Ser-126 serves as the catalytic Schiff-base intermediate with substrate; via pyruvic acid. Residue Ser-126 is modified to Pyruvic acid (Ser); by autocatalysis. His-131 (proton acceptor; for processing activity) is an active-site residue. The Proton donor; for catalytic activity role is filled by Cys-154.

It belongs to the prokaryotic AdoMetDC family. Type 2 subfamily. In terms of assembly, heterooctamer of four alpha and four beta chains arranged as a tetramer of alpha/beta heterodimers. Pyruvate is required as a cofactor. Is synthesized initially as an inactive proenzyme. Formation of the active enzyme involves a self-maturation process in which the active site pyruvoyl group is generated from an internal serine residue via an autocatalytic post-translational modification. Two non-identical subunits are generated from the proenzyme in this reaction, and the pyruvate is formed at the N-terminus of the alpha chain, which is derived from the carboxyl end of the proenzyme. The post-translation cleavage follows an unusual pathway, termed non-hydrolytic serinolysis, in which the side chain hydroxyl group of the serine supplies its oxygen atom to form the C-terminus of the beta chain, while the remainder of the serine residue undergoes an oxidative deamination to produce ammonia and the pyruvoyl group blocking the N-terminus of the alpha chain.

It carries out the reaction S-adenosyl-L-methionine + H(+) = S-adenosyl 3-(methylsulfanyl)propylamine + CO2. It functions in the pathway amine and polyamine biosynthesis; S-adenosylmethioninamine biosynthesis; S-adenosylmethioninamine from S-adenosyl-L-methionine: step 1/1. Catalyzes the decarboxylation of S-adenosylmethionine to S-adenosylmethioninamine (dcAdoMet), the propylamine donor required for the synthesis of the polyamines spermine and spermidine from the diamine putrescine. The protein is S-adenosylmethionine decarboxylase proenzyme of Alcanivorax borkumensis (strain ATCC 700651 / DSM 11573 / NCIMB 13689 / SK2).